The sequence spans 373 residues: SWI/SNF-related matrix-associated actin-dependent regulator of chromatin subfamily B member 1 (373 aa).

Residues 1–101 (MALSKAFGQK…DEKYKAVSIS (101 aa)) are DNA-binding.

It belongs to the SNF5 family. Component of the multiprotein chromatin-remodeling complexes SWI/SNF. Component of neural progenitors-specific chromatin remodeling complex (npBAF complex) and the neuron-specific chromatin remodeling complex (nBAF complex). Component of the BAF (SWI/SNF) chromatin remodeling complex. Component of the SWI/SNF-B (PBAF) chromatin remodeling complex. Binds to double-stranded DNA.

It is found in the nucleus. Functionally, involved in chromatin-remodeling. Core component of the BAF (SWI/SNF) complex. This ATP-dependent chromatin-remodeling complex plays important roles in cell proliferation and differentiation, in cellular antiviral activities and inhibition of tumor formation. Belongs to the neural progenitors-specific chromatin remodeling complex (npBAF complex) and the neuron-specific chromatin remodeling complex (nBAF complex) and may play a role in neural development. The chain is SWI/SNF-related matrix-associated actin-dependent regulator of chromatin subfamily B member 1 (smarcb1) from Dichotomyctere fluviatilis (Green pufferfish).